The chain runs to 410 residues: D-3-phosphoglycerate dehydrogenase (410 aa).

NAD(+) contacts are provided by residues 162-163, aspartate 182, 239-241, and aspartate 265; these read HI and AAR. The active site involves arginine 241. Glutamate 270 is an active-site residue. The active-site Proton donor is the histidine 293. An NAD(+)-binding site is contributed by 293 to 296; sequence HIGG. Residues 341–410 form the ACT domain; it reads RLLHIHENRP…DGTIRARVLY (70 aa).

It belongs to the D-isomer specific 2-hydroxyacid dehydrogenase family.

The catalysed reaction is (2R)-3-phosphoglycerate + NAD(+) = 3-phosphooxypyruvate + NADH + H(+). It catalyses the reaction (R)-2-hydroxyglutarate + NAD(+) = 2-oxoglutarate + NADH + H(+). It functions in the pathway amino-acid biosynthesis; L-serine biosynthesis; L-serine from 3-phospho-D-glycerate: step 1/3. With respect to regulation, in bacteria displays feedback inhibition by L-serine. Functionally, catalyzes the reversible oxidation of 3-phospho-D-glycerate to 3-phosphonooxypyruvate, the first step of the phosphorylated L-serine biosynthesis pathway. Also catalyzes the reversible oxidation of 2-hydroxyglutarate to 2-oxoglutarate. The chain is D-3-phosphoglycerate dehydrogenase (serA) from Haemophilus influenzae (strain ATCC 51907 / DSM 11121 / KW20 / Rd).